The primary structure comprises 462 residues: Ribosomal oxygenase 2 (462 aa).

A disordered region spans residues methionine 1–glutamate 24. The 133-residue stretch at glutamine 139–threonine 271 folds into the JmjC domain. 3 residues coordinate Fe cation: histidine 179, aspartate 181, and histidine 240. At serine 308 the chain carries Phosphoserine.

Belongs to the ROX family. MINA53 subfamily. It depends on Fe(2+) as a cofactor.

The protein localises to the nucleus. It localises to the nucleolus. It carries out the reaction L-histidyl-[ribosomal protein uL15] + 2-oxoglutarate + O2 = (3S)-3-hydroxy-L-histidyl-[ribosomal protein uL15] + succinate + CO2. The catalysed reaction is L-histidyl-[protein] + 2-oxoglutarate + O2 = (3S)-3-hydroxy-L-histidyl-[protein] + succinate + CO2. Functionally, oxygenase that can act as both a histone lysine demethylase and a ribosomal histidine hydroxylase. Is involved in the demethylation of trimethylated 'Lys-9' on histone H3 (H3K9me3), leading to an increase in ribosomal RNA expression. Also catalyzes the hydroxylation of 60S ribosomal protein L27a on 'His-39'. May play an important role in cell growth and survival. May be involved in ribosome biogenesis, most likely during the assembly process of pre-ribosomal particles. The chain is Ribosomal oxygenase 2 (RIOX2) from Bos taurus (Bovine).